Here is a 1031-residue protein sequence, read N- to C-terminus: Putative protein TIC 214 N-terminal part (1031 aa).

A run of 6 helical transmembrane segments spans residues 11-31 (ILWAQILSWISISGPLILFGL), 68-88 (TLGQLIILISIFYSPLYIMLL), 92-112 (AITLITLPYVLFYWYEIKDLS), 127-147 (GIIQIFLNSFLFQIFNPILLP), 166-186 (SFFVISLFCGWLGGNILLINL), and 212-232 (TFSIIIFVACLSYLGKFPVPF).

Belongs to the TIC214 family. Part of the Tic complex.

It is found in the plastid. Its subcellular location is the chloroplast inner membrane. Its function is as follows. Involved in protein precursor import into chloroplasts. May be part of an intermediate translocation complex acting as a protein-conducting channel at the inner envelope. The sequence is that of Putative protein TIC 214 N-terminal part from Anthoceros angustus (Hornwort).